The sequence spans 169 residues: Methanogen homoaconitase small subunit (169 aa).

The short motif at 27 to 30 is the YLRT element; the sequence is YLRT.

This sequence belongs to the LeuD family. LeuD type 2 subfamily. As to quaternary structure, heterotetramer of 2 HacA and 2 HacB proteins.

The catalysed reaction is (2R)-homocitrate = (2R,3S)-homoisocitrate. It catalyses the reaction (2R)-homocitrate = cis-homoaconitate + H2O. It carries out the reaction (2R,3S)-homoisocitrate = cis-homoaconitate + H2O. The enzyme catalyses cis-(homo)2aconitate + H2O = (2R,3S)-iso(homo)2citrate. The catalysed reaction is cis-(homo)3aconitate + H2O = (2R,3S)-iso(homo)3citrate. It functions in the pathway organic acid metabolism; 2-oxosuberate biosynthesis. Its function is as follows. Component of a hydro-lyase with broad substrate specificity for cis-unsaturated tricarboxylic acids. Catalyzes both the reversible dehydration of (R)-homocitrate ((R)-2-hydroxybutane-1,2,4-tricarboxylate) to produce cis-homoaconitate ((Z)-but-1-ene-1,2,4-tricarboxylate), and its hydration to homoisocitrate ((1R,2S)-1-hydroxybutane-1,2,4-tricarboxylate). Is also able to hydrate the analogous longer chain substrates cis-homo(2)-aconitate, cis-homo(3)-aconitate. These reactions are part of the biosynthesis pathway of coenzyme B. This Methanosarcina mazei (strain ATCC BAA-159 / DSM 3647 / Goe1 / Go1 / JCM 11833 / OCM 88) (Methanosarcina frisia) protein is Methanogen homoaconitase small subunit (hacB).